A 564-amino-acid chain; its full sequence is Kelch repeat and BTB domain-containing protein 1 (564 aa).

The region spanning 21–88 (CDINIVINDE…IYGIPLSLTN (68 aa)) is the BTB domain. The region spanning 123 to 219 (CIDFYIYADK…SLLSPQVIKS (97 aa)) is the BACK domain. 6 Kelch repeats span residues 252 to 297 (IELI…VLDN), 298 to 346 (IIYM…ADDE), 347 to 395 (YIYC…MLNG), 397 to 441 (IYVI…VHDG), 442 to 492 (KIYI…SAHN), and 494 to 539 (LYVG…CEPI).

In terms of assembly, interacts (via BTB domain) with host CUL3.

The protein resides in the host cytoplasm. Probable substrate-specific adapter of CUL3-containing E3 ubiquitin-protein ligases which mediate the ubiquitination and subsequent proteasomal degradation of host target proteins. This chain is Kelch repeat and BTB domain-containing protein 1 (KBTB1), found in Cowpox virus (strain GRI-90 / Grishak) (CPV).